The chain runs to 951 residues: Bifunctional glutamine synthetase adenylyltransferase/adenylyl-removing enzyme (951 aa).

The adenylyl removase stretch occupies residues Met1 to Thr440. The tract at residues His449–Ser951 is adenylyl transferase.

Belongs to the GlnE family. The cofactor is Mg(2+).

It catalyses the reaction [glutamine synthetase]-O(4)-(5'-adenylyl)-L-tyrosine + phosphate = [glutamine synthetase]-L-tyrosine + ADP. The catalysed reaction is [glutamine synthetase]-L-tyrosine + ATP = [glutamine synthetase]-O(4)-(5'-adenylyl)-L-tyrosine + diphosphate. In terms of biological role, involved in the regulation of glutamine synthetase GlnA, a key enzyme in the process to assimilate ammonia. When cellular nitrogen levels are high, the C-terminal adenylyl transferase (AT) inactivates GlnA by covalent transfer of an adenylyl group from ATP to specific tyrosine residue of GlnA, thus reducing its activity. Conversely, when nitrogen levels are low, the N-terminal adenylyl removase (AR) activates GlnA by removing the adenylyl group by phosphorolysis, increasing its activity. The regulatory region of GlnE binds the signal transduction protein PII (GlnB) which indicates the nitrogen status of the cell. This chain is Bifunctional glutamine synthetase adenylyltransferase/adenylyl-removing enzyme, found in Yersinia pseudotuberculosis serotype O:1b (strain IP 31758).